The primary structure comprises 336 residues: Phosphoribosylformylglycinamidine cyclo-ligase (336 aa).

The protein belongs to the AIR synthase family.

Its subcellular location is the cytoplasm. The catalysed reaction is 2-formamido-N(1)-(5-O-phospho-beta-D-ribosyl)acetamidine + ATP = 5-amino-1-(5-phospho-beta-D-ribosyl)imidazole + ADP + phosphate + H(+). Its pathway is purine metabolism; IMP biosynthesis via de novo pathway; 5-amino-1-(5-phospho-D-ribosyl)imidazole from N(2)-formyl-N(1)-(5-phospho-D-ribosyl)glycinamide: step 2/2. This chain is Phosphoribosylformylglycinamidine cyclo-ligase, found in Thermoanaerobacter sp. (strain X514).